A 321-amino-acid polypeptide reads, in one-letter code: Mechanosensory protein 3 (321 aa).

2 consecutive LIM zinc-binding domains span residues 27–86 (NKCN…DHSI) and 87–152 (HRCA…QMDD). Residues 217-276 (RRGPRTTIKQNQLDVLNEMFSNTPKPSKHARAKLALETGLSMRVIQVWFQNRRSKERRLK) constitute a DNA-binding region (homeobox).

Interacts with unc-86; the heterooligomer binds to the promoters of mec-3, mec-4 and mec-7. As to expression, expressed in the mechanosensory neurons ALML, ALMR, PLML, PLMR, AVM and PVM, and the FLPL and FLPR neurons.

It is found in the nucleus. In terms of biological role, transcription factor. Specifies differentiation of the set of six touch receptor neurons (TRNs). May positively modulate expression of both its own gene and also of homeobox ARX homolog alr-1 in TRNs, forming a positive feedback loop with alr-1, thereby restricting the variability of expression of mec-3. Required to determine the identity of ALM sensory neurons, acting by interacting with unc-86, thereby preventing unc-86 cooperating with pag-3 to induce BDU-neuron specific genes. Binds cooperatively as a heterodimer with unc-86 to sites in the mec-3 gene promoter. Promotes outgrowth of lateral dendritic branches on the PVD nociceptive neurons, probably acting both directly, and upstream of zinc finger protein egl-46. The chain is Mechanosensory protein 3 (mec-3) from Caenorhabditis elegans.